Consider the following 526-residue polypeptide: tRNA-2-methylthio-N(6)-dimethylallyladenosine synthase (526 aa).

Residues Arg-14–His-130 enclose the MTTase N-terminal domain. [4Fe-4S] cluster-binding residues include Cys-23, Cys-59, Cys-93, Cys-167, Cys-171, and Cys-174. Positions Arg-153–Glu-401 constitute a Radical SAM core domain. The region spanning Gln-404–Leu-483 is the TRAM domain.

It belongs to the methylthiotransferase family. MiaB subfamily. As to quaternary structure, monomer. [4Fe-4S] cluster serves as cofactor.

The protein localises to the cytoplasm. The enzyme catalyses N(6)-dimethylallyladenosine(37) in tRNA + (sulfur carrier)-SH + AH2 + 2 S-adenosyl-L-methionine = 2-methylsulfanyl-N(6)-dimethylallyladenosine(37) in tRNA + (sulfur carrier)-H + 5'-deoxyadenosine + L-methionine + A + S-adenosyl-L-homocysteine + 2 H(+). Catalyzes the methylthiolation of N6-(dimethylallyl)adenosine (i(6)A), leading to the formation of 2-methylthio-N6-(dimethylallyl)adenosine (ms(2)i(6)A) at position 37 in tRNAs that read codons beginning with uridine. The protein is tRNA-2-methylthio-N(6)-dimethylallyladenosine synthase of Mycobacterium sp. (strain JLS).